The following is a 235-amino-acid chain: Ribonuclease 3 (235 aa).

The region spanning 6-135 (LISLEKILGF…VIGAVYFDCG (130 aa)) is the RNase III domain. Glu48 provides a ligand contact to Mg(2+). Asp52 is a catalytic residue. Mg(2+) is bound by residues Asn121 and Glu124. Glu124 is a catalytic residue. Residues 162-231 (DEKTTLQELL…AKKALELLKN (70 aa)) form the DRBM domain.

The protein belongs to the ribonuclease III family. As to quaternary structure, homodimer. Mg(2+) serves as cofactor.

The protein localises to the cytoplasm. The catalysed reaction is Endonucleolytic cleavage to 5'-phosphomonoester.. Its function is as follows. Digests double-stranded RNA. Involved in the processing of primary rRNA transcript to yield the immediate precursors to the large and small rRNAs (23S and 16S). Processes some mRNAs, and tRNAs when they are encoded in the rRNA operon. Processes pre-crRNA and tracrRNA of type II CRISPR loci if present in the organism. This Carboxydothermus hydrogenoformans (strain ATCC BAA-161 / DSM 6008 / Z-2901) protein is Ribonuclease 3.